A 188-amino-acid chain; its full sequence is dCTP deaminase, dUMP-forming (188 aa).

Residues 101–106 (KSSLGR), Asp-119, 127–129 (TLE), Gln-148, Tyr-162, and Gln-174 contribute to the dCTP site. Glu-129 (proton donor/acceptor) is an active-site residue.

Belongs to the dCTP deaminase family. As to quaternary structure, homotrimer.

It carries out the reaction dCTP + 2 H2O = dUMP + NH4(+) + diphosphate. It participates in pyrimidine metabolism; dUMP biosynthesis; dUMP from dCTP: step 1/1. Its function is as follows. Bifunctional enzyme that catalyzes both the deamination of dCTP to dUTP and the hydrolysis of dUTP to dUMP without releasing the toxic dUTP intermediate. The chain is dCTP deaminase, dUMP-forming from Corynebacterium jeikeium (strain K411).